Consider the following 274-residue polypeptide: MKNTFVYQAEKPVIKLLQITDPHLFKDESAELLGVNTQASFAQVLKEIQQENNEFDVILATGDLVQDSSDEGYIRFVEMMKPFNKPVFWIPGNHDFQPKMAEFLNQPPMNAAKHLLLGEHWQALLLDSQVYGVPHGQLSQHQLDLLKETLGKNPERYTLVVLHHHLLPTNSAWLDQHNLRNSHELAEVLAPFTNVKAILYGHIHQEVNSEWNGYQVMATPATCIQFKPDCQYFSLDTLQPGWREIELHSDGSIRTEVKRIQQAEFFPNMQEEGY.

Residues Asp-21, His-23, Asp-63, Asn-93, His-163, His-202, and His-204 each contribute to the Fe cation site. AMP contacts are provided by residues His-23, Asp-63, and 93 to 94; that span reads NH. An AMP-binding site is contributed by His-204.

The protein belongs to the cyclic nucleotide phosphodiesterase class-III family. The cofactor is Fe(2+).

It catalyses the reaction 3',5'-cyclic AMP + H2O = AMP + H(+). Its function is as follows. Hydrolyzes cAMP to 5'-AMP. Plays an important regulatory role in modulating the intracellular concentration of cAMP, thereby influencing cAMP-dependent processes. May coordinate responses to nutritional stress, ensuring optimal competence development. This Haemophilus influenzae (strain ATCC 51907 / DSM 11121 / KW20 / Rd) protein is 3',5'-cyclic adenosine monophosphate phosphodiesterase CpdA.